We begin with the raw amino-acid sequence, 269 residues long: 4-hydroxy-tetrahydrodipicolinate reductase (269 aa).

Residues 9–14 (GAGGRM) and glutamate 35 each bind NAD(+). Position 36 (arginine 36) interacts with NADP(+). Residues 98 to 100 (GTT) and 122 to 125 (ASNY) contribute to the NAD(+) site. Histidine 155 acts as the Proton donor/acceptor in catalysis. Residue histidine 156 participates in (S)-2,3,4,5-tetrahydrodipicolinate binding. The active-site Proton donor is the lysine 159. 165–166 (GT) lines the (S)-2,3,4,5-tetrahydrodipicolinate pocket.

This sequence belongs to the DapB family.

It localises to the cytoplasm. The enzyme catalyses (S)-2,3,4,5-tetrahydrodipicolinate + NAD(+) + H2O = (2S,4S)-4-hydroxy-2,3,4,5-tetrahydrodipicolinate + NADH + H(+). The catalysed reaction is (S)-2,3,4,5-tetrahydrodipicolinate + NADP(+) + H2O = (2S,4S)-4-hydroxy-2,3,4,5-tetrahydrodipicolinate + NADPH + H(+). Its pathway is amino-acid biosynthesis; L-lysine biosynthesis via DAP pathway; (S)-tetrahydrodipicolinate from L-aspartate: step 4/4. Catalyzes the conversion of 4-hydroxy-tetrahydrodipicolinate (HTPA) to tetrahydrodipicolinate. The chain is 4-hydroxy-tetrahydrodipicolinate reductase from Actinobacillus pleuropneumoniae serotype 7 (strain AP76).